Here is a 323-residue protein sequence, read N- to C-terminus: Olfactory receptor 5P58 (323 aa).

Residues 1-28 (MAFLEDGNHTAVTEFILVGLTDDPVLKV) are Extracellular-facing. Asn8 carries an N-linked (GlcNAc...) asparagine glycan. A helical membrane pass occupies residues 29–49 (ILFTIILCIYLVTVSGNLSTI). Topologically, residues 50-57 (LLIRVSSQ) are cytoplasmic. The chain crosses the membrane as a helical span at residues 58–78 (LHHPMYFFLSHLASVDLGYSS). The Extracellular segment spans residues 79-102 (SVTPNMLINFLAENNTISYIGCSI). A glycan (N-linked (GlcNAc...) asparagine) is linked at Asn92. Cysteines 100 and 192 form a disulfide. Residues 103–123 (QFGSATFFGVLECFLLAVMAY) form a helical membrane-spanning segment. At 124-136 (DRFVAICNPLLYS) the chain is on the cytoplasmic side. The chain crosses the membrane as a helical span at residues 137 to 157 (IKMSTQVCVKLVVGSYIGSSL). Residues 158–199 (NASFVTVSIFNLLFCGPNKINHFFCDFDPLIELSCSDVSVPV) are Extracellular-facing. The chain crosses the membrane as a helical span at residues 200 to 220 (AVTSCSAGLITMITVFVIAVS). The Cytoplasmic segment spans residues 221–240 (YTYILITVLKMRSTEGRHKA). The helical transmembrane segment at 241 to 261 (FSTCTSHLTAVTLFYGTVTFI) threads the bilayer. Topologically, residues 262–274 (YVMPKSNYSTDQN) are extracellular. Asn268 carries an N-linked (GlcNAc...) asparagine glycan. Residues 275–295 (KVVSVFYMVVIPMLNPLIYSL) form a helical membrane-spanning segment. Topologically, residues 296-323 (RNNEIKGALKRQLGKKIFSQSNILFCKS) are cytoplasmic.

It belongs to the G-protein coupled receptor 1 family.

Its subcellular location is the cell membrane. Its function is as follows. Potential odorant receptor. The protein is Olfactory receptor 5P58 of Mus musculus (Mouse).